Here is a 184-residue protein sequence, read N- to C-terminus: UPF0149 protein PputW619_5026 (184 aa).

It belongs to the UPF0149 family.

The sequence is that of UPF0149 protein PputW619_5026 from Pseudomonas putida (strain W619).